A 210-amino-acid chain; its full sequence is V-type sodium ATPase subunit D (210 aa).

It belongs to the V-ATPase D subunit family.

Involved in ATP-driven sodium extrusion. This chain is V-type sodium ATPase subunit D (ntpD), found in Enterococcus hirae (strain ATCC 9790 / DSM 20160 / JCM 8729 / LMG 6399 / NBRC 3181 / NCIMB 6459 / NCDO 1258 / NCTC 12367 / WDCM 00089 / R).